The sequence spans 150 residues: Copper transporter 3 (150 aa).

The next 2 membrane-spanning stretches (helical) occupy residues 50 to 70 and 100 to 120; these read GGMY…LEFL and LAYL…LAAV.

This sequence belongs to the copper transporter (Ctr) (TC 1.A.56) family. SLC31A subfamily.

The protein resides in the membrane. In terms of biological role, involved in the transport of copper. In Oryza sativa subsp. japonica (Rice), this protein is Copper transporter 3 (COPT3).